The chain runs to 181 residues: Crustacyanin-C1 subunit (181 aa).

3 disulfides stabilise this stretch: Cys-12–Cys-121, Cys-51–Cys-173, and Cys-117–Cys-150.

The protein belongs to the calycin superfamily. Lipocalin family. As to quaternary structure, oligomer; Can form dimers (beta-crustacyanin); or complexes of 16 subunits (alpha-crustacyanin). There are five types of subunits: A1, A2, A3, C1 and C2. Found in the carapace.

The protein localises to the secreted. It localises to the extracellular space. Its function is as follows. Binds the carotenoid astaxanthin (AXT) which provides the blue coloration to the carapace of the lobster. This Homarus gammarus (European lobster) protein is Crustacyanin-C1 subunit.